Consider the following 303-residue polypeptide: Coenzyme PQQ synthesis protein B (303 aa).

Belongs to the PqqB family.

Its pathway is cofactor biosynthesis; pyrroloquinoline quinone biosynthesis. May be involved in the transport of PQQ or its precursor to the periplasm. The chain is Coenzyme PQQ synthesis protein B from Pseudomonas putida (strain ATCC 47054 / DSM 6125 / CFBP 8728 / NCIMB 11950 / KT2440).